Consider the following 46-residue polypeptide: Defensin-like protein AX2 (46 aa).

4 cysteine pairs are disulfide-bonded: C3–C46, C14–C34, C20–C40, and C24–C42.

As to expression, leaves and flowers.

Its function is as follows. Strong inhibiting activity against C.beticola and other filamentous fungi. Little or no effect against bacteria. This is Defensin-like protein AX2 from Beta vulgaris (Sugar beet).